Consider the following 398-residue polypeptide: UPF0496 protein At5g66660 (398 aa).

2 helical membrane-spanning segments follow: residues 240–260 and 263–283; these read VFFA…TTMS and PVVC…GKWF.

It belongs to the UPF0496 family.

It is found in the membrane. In Arabidopsis thaliana (Mouse-ear cress), this protein is UPF0496 protein At5g66660.